Consider the following 838-residue polypeptide: Rab effector MyRIP (838 aa).

Residues 4–124 (KLDLSGLSNN…TQSLEWFYNN (121 aa)) enclose the RabBD domain. Residues 58–112 (KFNEHCCIRCCSPFTFLLNPKRQCLDCHYNICKSCCSYSQSERGYICAACQKSRH) form an FYVE-type zinc finger. The stretch at 188–237 (ADTLTVALRVAEEAIEEAIAKAENYKDSLEKQNEARYLHEHKEELIEELA) forms a coiled coil. Polar residues-rich tracts occupy residues 263–290 (QNQK…TSQP) and 451–484 (TFTQ…SPST). Disordered stretches follow at residues 263-331 (QNQK…TEVE), 444-501 (SQHD…ETHL), 525-570 (NFNP…LYSA), and 681-838 (ERDV…EKRN). Composition is skewed to basic and acidic residues over residues 697-736 (NKQE…ERQT) and 753-838 (RQMK…EKRN). Residues 714-833 (KERRESKRES…DLEKKRKSIR (120 aa)) are a coiled coil.

Interacts with prkar2aa.

The protein resides in the cytoplasm. Its subcellular location is the perinuclear region. The protein localises to the cytoplasmic vesicle. It is found in the secretory vesicle. In terms of biological role, may link secretory vesicles to actin filaments. May function as a protein kinase A-anchoring protein (AKAP). May act as a scaffolding protein that links PKA to components of the exocytosis machinery, thus facilitating exocytosis. In Danio rerio (Zebrafish), this protein is Rab effector MyRIP (myrip).